The primary structure comprises 160 residues: Phosphopantetheine adenylyltransferase (160 aa).

Serine 10 provides a ligand contact to substrate. ATP-binding positions include 10–11 (SF) and histidine 18. 3 residues coordinate substrate: lysine 42, threonine 74, and arginine 88. ATP-binding positions include 89–91 (GLR), glutamate 99, and 124–130 (YSFVSST).

Belongs to the bacterial CoaD family. In terms of assembly, homohexamer. Mg(2+) serves as cofactor.

It is found in the cytoplasm. It catalyses the reaction (R)-4'-phosphopantetheine + ATP + H(+) = 3'-dephospho-CoA + diphosphate. Its pathway is cofactor biosynthesis; coenzyme A biosynthesis; CoA from (R)-pantothenate: step 4/5. Reversibly transfers an adenylyl group from ATP to 4'-phosphopantetheine, yielding dephospho-CoA (dPCoA) and pyrophosphate. The polypeptide is Phosphopantetheine adenylyltransferase (Leptospira biflexa serovar Patoc (strain Patoc 1 / Ames)).